Reading from the N-terminus, the 160-residue chain is Regulatory protein RecX (160 aa).

It belongs to the RecX family.

The protein localises to the cytoplasm. Functionally, modulates RecA activity. The sequence is that of Regulatory protein RecX from Pelodictyon phaeoclathratiforme (strain DSM 5477 / BU-1).